The sequence spans 137 residues: uncharacterized protein (137 aa).

The protein belongs to the ycf72 family.

Its subcellular location is the plastid. It localises to the chloroplast. This is an uncharacterized protein from Saccharum hybrid (Sugarcane).